Consider the following 149-residue polypeptide: Large ribosomal subunit protein uL11 (149 aa).

Belongs to the universal ribosomal protein uL11 family. Part of the ribosomal stalk of the 50S ribosomal subunit. Interacts with L10 and the large rRNA to form the base of the stalk. L10 forms an elongated spine to which L12 dimers bind in a sequential fashion forming a multimeric L10(L12)X complex. In terms of processing, one or more lysine residues are methylated.

Its function is as follows. Forms part of the ribosomal stalk which helps the ribosome interact with GTP-bound translation factors. The protein is Large ribosomal subunit protein uL11 of Azorhizobium caulinodans (strain ATCC 43989 / DSM 5975 / JCM 20966 / LMG 6465 / NBRC 14845 / NCIMB 13405 / ORS 571).